We begin with the raw amino-acid sequence, 230 residues long: Octanoyltransferase (230 aa).

The region spanning 38 to 215 (AGGADTLLLL…AVCAALDGVL (178 aa)) is the BPL/LPL catalytic domain. Substrate-binding positions include 76 to 83 (RGGKITWH), 145 to 147 (AIG), and 158 to 160 (GFA). Residue C176 is the Acyl-thioester intermediate of the active site.

This sequence belongs to the LipB family.

It localises to the cytoplasm. It catalyses the reaction octanoyl-[ACP] + L-lysyl-[protein] = N(6)-octanoyl-L-lysyl-[protein] + holo-[ACP] + H(+). The protein operates within protein modification; protein lipoylation via endogenous pathway; protein N(6)-(lipoyl)lysine from octanoyl-[acyl-carrier-protein]: step 1/2. Its function is as follows. Catalyzes the transfer of endogenously produced octanoic acid from octanoyl-acyl-carrier-protein onto the lipoyl domains of lipoate-dependent enzymes. Lipoyl-ACP can also act as a substrate although octanoyl-ACP is likely to be the physiological substrate. In Mycobacterium tuberculosis (strain ATCC 25177 / H37Ra), this protein is Octanoyltransferase.